The primary structure comprises 585 residues: Putative ABC transporter ATP-binding protein MG187 (585 aa).

The ABC transporter domain maps to 8–468 (IELKNIVVDF…PANEFVARFL (461 aa)). 40 to 47 (GPSGCGKT) is a binding site for ATP.

Belongs to the ABC transporter superfamily.

This Mycoplasma genitalium (strain ATCC 33530 / DSM 19775 / NCTC 10195 / G37) (Mycoplasmoides genitalium) protein is Putative ABC transporter ATP-binding protein MG187.